The chain runs to 210 residues: Glutathione S-transferase P (210 aa).

A GST N-terminal domain is found at 2-81; the sequence is PPYTIVYFPV…HLGRSLGLYG (80 aa). Phosphotyrosine; by EGFR is present on Tyr4. Glutathione is bound by residues Tyr8, Arg14, Trp39, Lys45, 52–53, and 65–66; these read QL and QS. The GST C-terminal domain maps to 83–204; the sequence is DQKEAALVDM…SSPDHVNRPI (122 aa). N6-succinyllysine is present on residues Lys103 and Lys116. Lys128 is modified (N6-acetyllysine).

The protein belongs to the GST superfamily. Pi family. As to quaternary structure, homodimer. Interacts with CDK5.

It localises to the cytoplasm. Its subcellular location is the mitochondrion. The protein resides in the nucleus. The enzyme catalyses RX + glutathione = an S-substituted glutathione + a halide anion + H(+). The catalysed reaction is prostaglandin J2 + glutathione = prostaglandin J2-S-(R)-glutathione. It carries out the reaction prostaglandin J2 + glutathione = prostaglandin J2-S-(S)-glutathione. It catalyses the reaction prostaglandin A2 + glutathione = prostaglandin A2-S-(S)-glutathione. The enzyme catalyses 11(S)-hydroxy-14(S),15(S)-epoxy-(5Z,8Z,12E)-eicosatrienoate + glutathione = (11S,15S)-dihydroxy-14(R)-S-glutathionyl-(5Z,8Z,12E)-eicosatrienoate. Its function is as follows. Conjugation of reduced glutathione to a wide number of exogenous and endogenous hydrophobic electrophiles. Involved in the formation of glutathione conjugates of both prostaglandin A2 (PGA2) and prostaglandin J2 (PGJ2). Participates in the formation of novel hepoxilin regioisomers. Negatively regulates CDK5 activity via p25/p35 translocation to prevent neurodegeneration. The polypeptide is Glutathione S-transferase P (GSTP1) (Mesocricetus auratus (Golden hamster)).